A 132-amino-acid chain; its full sequence is Small ribosomal subunit protein bS6 (132 aa).

Residues 99 to 132 are disordered; sequence ASPMVKAKDERRGDRREDFANETADDADAGDSEE. Residues 104-117 show a composition bias toward basic and acidic residues; the sequence is KAKDERRGDRREDF. Residues 121 to 132 are compositionally biased toward acidic residues; it reads TADDADAGDSEE.

This sequence belongs to the bacterial ribosomal protein bS6 family.

Its function is as follows. Binds together with bS18 to 16S ribosomal RNA. The polypeptide is Small ribosomal subunit protein bS6 (Serratia proteamaculans (strain 568)).